A 67-amino-acid chain; its full sequence is Bowman-Birk type major trypsin inhibitor (67 aa).

Intrachain disulfides connect cysteine 8–cysteine 63, cysteine 9–cysteine 24, cysteine 14–cysteine 22, cysteine 31–cysteine 38, and cysteine 35–cysteine 51.

The protein belongs to the Bowman-Birk serine protease inhibitor family.

This chain is Bowman-Birk type major trypsin inhibitor, found in Setaria italica (Foxtail millet).